The following is a 228-amino-acid chain: Translin (228 aa).

The tract at residues Arg86 to His90 is DNA/RNA binding. Residues Leu177–Leu198 are leucine-zipper. Position 187 is an N6-acetyllysine (Lys187). Ser190 carries the phosphoserine modification. At Lys199 the chain carries N6-acetyllysine.

It belongs to the translin family. In terms of assembly, ring-shaped heterooctamer of six TSN and two TSNAX subunits, DNA/RNA binding occurs inside the ring.

Its subcellular location is the cytoplasm. It is found in the nucleus. DNA-binding protein that specifically recognizes consensus sequences at the breakpoint junctions in chromosomal translocations, mostly involving immunoglobulin (Ig)/T-cell receptor gene segments. Seems to recognize single-stranded DNA ends generated by staggered breaks occurring at recombination hot spots. In terms of biological role, exhibits both single-stranded and double-stranded endoribonuclease activity. May act as an activator of RNA-induced silencing complex (RISC) by facilitating endonucleolytic cleavage of the siRNA passenger strand. The sequence is that of Translin (TSN) from Cricetulus griseus (Chinese hamster).